We begin with the raw amino-acid sequence, 530 residues long: Calcium-dependent protein kinase 14 (530 aa).

The N-myristoyl glycine moiety is linked to residue Gly-2. In terms of domain architecture, Protein kinase spans 54–312 (YKLGRELGRG…AQQVLDHPWI (259 aa)). ATP contacts are provided by residues 60–68 (LGRGEFGVT) and Lys-83. Asp-178 (proton acceptor) is an active-site residue. The residue at position 218 (Ser-218) is a Phosphoserine. An autoinhibitory domain region spans residues 318–348 (ASNVSLGETVRARLKQFSVMNKLKKRALRVI). EF-hand domains follow at residues 355-390 (EETS…LGIV), 391-426 (VPQD…IRKL), 427-462 (GNDE…DVDT), and 463-498 (TSEE…GTDW). 18 residues coordinate Ca(2+): Asp-368, Ser-370, Lys-374, Glu-379, Asp-404, Asp-406, Asp-408, Tyr-410, Glu-415, Asp-440, Asn-442, Ser-444, Tyr-446, Glu-451, Asp-476, Asn-478, Asp-480, and Lys-482. Ser-484 carries the post-translational modification Phosphoserine. A Ca(2+)-binding site is contributed by Glu-487.

Belongs to the protein kinase superfamily. Ser/Thr protein kinase family. CDPK subfamily.

It is found in the membrane. The catalysed reaction is L-seryl-[protein] + ATP = O-phospho-L-seryl-[protein] + ADP + H(+). It catalyses the reaction L-threonyl-[protein] + ATP = O-phospho-L-threonyl-[protein] + ADP + H(+). Its activity is regulated as follows. Activated by calcium. Autophosphorylation may play an important role in the regulation of the kinase activity. Its function is as follows. May play a role in signal transduction pathways that involve calcium as a second messenger. The protein is Calcium-dependent protein kinase 14 (CPK14) of Arabidopsis thaliana (Mouse-ear cress).